A 694-amino-acid chain; its full sequence is Long-chain-fatty-acid--CoA ligase 4 (694 aa).

A disordered region spans residues 1-21 (MTEQYSVAVGEAANEHETAPR). 269–280 (YTSGSTGTPKGV) is an ATP binding site. Residues 527–576 (DGWFRTGDIAEWTPKGQVKIIDRKKNLVKTLNGEYIALEKLESIYRSNPY) carry the FACS motif.

Belongs to the ATP-dependent AMP-binding enzyme family. Interacts with FAT1. Requires Mg(2+) as cofactor.

It localises to the lipid droplet. The enzyme catalyses a long-chain fatty acid + ATP + CoA = a long-chain fatty acyl-CoA + AMP + diphosphate. The catalysed reaction is (9Z)-hexadecenoate + ATP + CoA = (9Z)-hexadecenoyl-CoA + AMP + diphosphate. It carries out the reaction (9Z)-octadecenoate + ATP + CoA = (9Z)-octadecenoyl-CoA + AMP + diphosphate. It catalyses the reaction hexadecanoate + ATP + CoA = hexadecanoyl-CoA + AMP + diphosphate. Its function is as follows. Activates long-chain fatty acids (LCFA) by esterification of the fatty acids into metabolically active CoA-thioesters for subsequent degradation or incorporation into phospholipids. Also facilitates the transport of LCFAs into the cell, either by active transport or by decreasing the intracellular LCFA concentration. Contributes, with FAA1, to the activation of imported myristate. Also involved in long-chain base (LCB) uptake. In contrast ot LCFA uptake, LCB uptake does not require ATP, suggesting that the enzyme is directly involved in LCB uptake. Involved in the sphingolipid-to-glycerolipid metabolic pathway, converting the sphingolipid metabolite hexadecenoic acid to hexadecenoyl-CoA, which is then further converted to glycerolipids. The chain is Long-chain-fatty-acid--CoA ligase 4 (FAA4) from Saccharomyces cerevisiae (strain ATCC 204508 / S288c) (Baker's yeast).